The following is an 87-amino-acid chain: Small ribosomal subunit protein bS20 (87 aa).

The interval 1 to 26 is disordered; the sequence is MANIKSAKKRAVQSEKARKHNASRRS.

It belongs to the bacterial ribosomal protein bS20 family.

Binds directly to 16S ribosomal RNA. The sequence is that of Small ribosomal subunit protein bS20 from Salmonella typhi.